The primary structure comprises 365 residues: Flagellar P-ring protein (365 aa).

The N-terminal stretch at 1–19 (MIKFLSALILLLVTTAAQA) is a signal peptide.

The protein belongs to the FlgI family. In terms of assembly, the basal body constitutes a major portion of the flagellar organelle and consists of four rings (L,P,S, and M) mounted on a central rod.

It localises to the periplasm. Its subcellular location is the bacterial flagellum basal body. Assembles around the rod to form the L-ring and probably protects the motor/basal body from shearing forces during rotation. This chain is Flagellar P-ring protein, found in Shigella boydii serotype 4 (strain Sb227).